A 131-amino-acid chain; its full sequence is Insertion element IS1 protein InsB (131 aa).

It belongs to the transposase 27 family.

Functionally, absolutely required for transposition of IS1. In Shigella flexneri, this protein is Insertion element IS1 protein InsB (insB1).